A 362-amino-acid polypeptide reads, in one-letter code: tRNA/tmRNA (uracil-C(5))-methyltransferase (362 aa).

Positions 182, 210, 215, 231, and 293 each coordinate S-adenosyl-L-methionine. The active-site Nucleophile is the C318. E352 serves as the catalytic Proton acceptor.

This sequence belongs to the class I-like SAM-binding methyltransferase superfamily. RNA M5U methyltransferase family. TrmA subfamily.

The enzyme catalyses uridine(54) in tRNA + S-adenosyl-L-methionine = 5-methyluridine(54) in tRNA + S-adenosyl-L-homocysteine + H(+). It catalyses the reaction uridine(341) in tmRNA + S-adenosyl-L-methionine = 5-methyluridine(341) in tmRNA + S-adenosyl-L-homocysteine + H(+). Its function is as follows. Dual-specificity methyltransferase that catalyzes the formation of 5-methyluridine at position 54 (m5U54) in all tRNAs, and that of position 341 (m5U341) in tmRNA (transfer-mRNA). The polypeptide is tRNA/tmRNA (uracil-C(5))-methyltransferase (Neisseria gonorrhoeae (strain ATCC 700825 / FA 1090)).